Consider the following 176-residue polypeptide: N,N-dimethyl phenylurea N-demethylase subunit beta (176 aa).

The protein belongs to the bacterial ring-hydroxylating dioxygenase beta subunit family. As to quaternary structure, pdmA (subunit alpha) and PdmB (subunit beta) form the oxygenase component of a bacterial Rieske non-heme iron oxygenase (RO) system.

It catalyses the reaction a 1,1-dimethyl-3-phenylurea + 2 reduced [2Fe-2S]-[ferredoxin] + O2 + 2 H(+) = a 1-methyl-3-phenylurea + formaldehyde + 2 oxidized [2Fe-2S]-[ferredoxin] + H2O. The enzyme catalyses isoproturon + 2 reduced [2Fe-2S]-[ferredoxin] + O2 + 2 H(+) = 1-methyl-3-[4-(propan-2-yl)phenyl]urea + formaldehyde + 2 oxidized [2Fe-2S]-[ferredoxin] + H2O. The catalysed reaction is chlorotoluron + 2 reduced [2Fe-2S]-[ferredoxin] + O2 + 2 H(+) = 3-(3-chloro-4-methylphenyl)-1-methylurea + formaldehyde + 2 oxidized [2Fe-2S]-[ferredoxin] + H2O. It carries out the reaction metoxuron + 2 reduced [2Fe-2S]-[ferredoxin] + O2 + 2 H(+) = 3-(3-chloro-4-methoxylphenyl)-1-methylurea + formaldehyde + 2 oxidized [2Fe-2S]-[ferredoxin] + H2O. It catalyses the reaction monuron + 2 reduced [2Fe-2S]-[ferredoxin] + O2 + 2 H(+) = 3-(4-chlorophenyl)-1-methylurea + formaldehyde + 2 oxidized [2Fe-2S]-[ferredoxin] + H2O. The enzyme catalyses diuron + 2 reduced [2Fe-2S]-[ferredoxin] + O2 + 2 H(+) = 3-(3,4-dichlorophenyl)-1-methylurea + formaldehyde + 2 oxidized [2Fe-2S]-[ferredoxin] + H2O. The catalysed reaction is fluometuron + 2 reduced [2Fe-2S]-[ferredoxin] + O2 + 2 H(+) = 3-[3-(trifluoromethyl)phenyl]-1-methylurea + formaldehyde + 2 oxidized [2Fe-2S]-[ferredoxin] + H2O. It carries out the reaction fenuron + 2 reduced [2Fe-2S]-[ferredoxin] + O2 + 2 H(+) = 1-methyl-3-phenylurea + formaldehyde + 2 oxidized [2Fe-2S]-[ferredoxin] + H2O. The protein operates within xenobiotic degradation. Activity is stimulated in vitro by coexpression of a [3Fe-4S]-type ferredoxin. In terms of biological role, part of the multicomponent N,N-dimethyl phenylurea N-demethylase responsible for the initial N-demethylation step during the bacterial metabolism of N,N-dimethyl-substituted phenylurea herbicides. Catalyzes the mono-N-demethylation of N,N-dimethyl-substituted phenylurea herbicides to their mono-N-demethylated derivatives. Is active on isoproturon (IPU), chlorotoluron, metoxuron, monoron, diuron, fluometuron and fenuron, but cannot transform the N-methoxy-N-methyl-substituted herbicides. The sequence is that of N,N-dimethyl phenylurea N-demethylase subunit beta from Sphingobium sp. (strain YBL2).